Here is a 356-residue protein sequence, read N- to C-terminus: Manganese-dependent ADP-ribose/CDP-alcohol diphosphatase (356 aa).

D32, Q34, D81, N117, H253, H290, and H292 together coordinate Zn(2+).

This sequence belongs to the ADPRibase-Mn family. In terms of assembly, monomer. Mg(2+) serves as cofactor.

The enzyme catalyses CDP-choline + H2O = phosphocholine + CMP + 2 H(+). It catalyses the reaction ADP-D-ribose + H2O = D-ribose 5-phosphate + AMP + 2 H(+). It carries out the reaction CDP-glycerol + H2O = sn-glycerol 3-phosphate + CMP + 2 H(+). Hydrolyzes ADP-ribose, IDP-ribose, CDP-glycerol, CDP-choline and CDP-ethanolamine, but not other non-reducing ADP-sugars or CDP-glucose. The chain is Manganese-dependent ADP-ribose/CDP-alcohol diphosphatase (adprm) from Xenopus laevis (African clawed frog).